The chain runs to 846 residues: DNA mismatch repair protein MutS (846 aa).

Residue 610–617 (GPNMGGKS) participates in ATP binding.

This sequence belongs to the DNA mismatch repair MutS family.

This protein is involved in the repair of mismatches in DNA. It is possible that it carries out the mismatch recognition step. This protein has a weak ATPase activity. The polypeptide is DNA mismatch repair protein MutS (Legionella pneumophila (strain Corby)).